Consider the following 392-residue polypeptide: Formate-dependent phosphoribosylglycinamide formyltransferase (392 aa).

N(1)-(5-phospho-beta-D-ribosyl)glycinamide contacts are provided by residues 22-23 (EL) and Glu82. ATP is bound by residues Arg114, Lys155, 160–165 (SSGKGQ), 195–198 (EGVV), and Glu203. One can recognise an ATP-grasp domain in the interval 119–308 (RLAAEELWVP…EFALHVRAFL (190 aa)). Mg(2+) contacts are provided by Glu267 and Glu279. N(1)-(5-phospho-beta-D-ribosyl)glycinamide-binding positions include Asp286, Lys355, and 362–363 (RR).

It belongs to the PurK/PurT family. In terms of assembly, homodimer.

The catalysed reaction is N(1)-(5-phospho-beta-D-ribosyl)glycinamide + formate + ATP = N(2)-formyl-N(1)-(5-phospho-beta-D-ribosyl)glycinamide + ADP + phosphate + H(+). The protein operates within purine metabolism; IMP biosynthesis via de novo pathway; N(2)-formyl-N(1)-(5-phospho-D-ribosyl)glycinamide from N(1)-(5-phospho-D-ribosyl)glycinamide (formate route): step 1/1. Functionally, involved in the de novo purine biosynthesis. Catalyzes the transfer of formate to 5-phospho-ribosyl-glycinamide (GAR), producing 5-phospho-ribosyl-N-formylglycinamide (FGAR). Formate is provided by PurU via hydrolysis of 10-formyl-tetrahydrofolate. This is Formate-dependent phosphoribosylglycinamide formyltransferase from Erwinia tasmaniensis (strain DSM 17950 / CFBP 7177 / CIP 109463 / NCPPB 4357 / Et1/99).